A 185-amino-acid polypeptide reads, in one-letter code: Pro-adrenomedullin (185 aa).

The first 21 residues, 1 to 21 (MKLVSIALMLLGSLAVLGADT), serve as a signal peptide directing secretion. At Arg-41 the chain carries Arginine amide. Residues 45-91 (ELQASSSYPTGLVDEKTVPTQTLGLQDKQSTSSTPQASTQSTAHIRV) constitute a propeptide that is removed on maturation. Positions 68–89 (GLQDKQSTSSTPQASTQSTAHI) are disordered. The segment covering 73 to 87 (QSTSSTPQASTQSTA) has biased composition (low complexity). Cysteines 107 and 112 form a disulfide. The interval 125-185 (TDKDKDGMAP…HQDISRVSRL (61 aa)) is disordered. Residue Tyr-143 is modified to Tyrosine amide. The propeptide at 150–185 (SLPEVLRARTVESSQEQTHSAPASPAHQDISRVSRL) is preproAM C-terminal fragment. Residues 160–170 (VESSQEQTHSA) are compositionally biased toward polar residues.

The protein belongs to the adrenomedullin family. In terms of tissue distribution, expressed in adrenal glands, lung, kidney, heart, spleen, duodenum and submandibular glands.

Its subcellular location is the secreted. In terms of biological role, adrenomedullin/ADM and proadrenomedullin N-20 terminal peptide/PAMP are peptide hormones that act as potent hypotensive and vasodilatator agents. Numerous actions have been reported most related to the physiologic control of fluid and electrolyte homeostasis. Its function is as follows. ADM function is mediated by the CALCRL-RAMP2 and CALCRL-RAMP3 receptor complexes with ADM showing the highest potency for the CALCRL-RAMP2 complex. The polypeptide is Pro-adrenomedullin (Rattus norvegicus (Rat)).